The sequence spans 152 residues: Transcriptional repressor NrdR (152 aa).

A zinc finger spans residues 3–34 (CPYCQHPDSDVIDTRKLHNGETIRRRRKCEAC). In terms of domain architecture, ATP-cone spans 49–139 (ITVVKKNGER…VYRSFADIGK (91 aa)).

The protein belongs to the NrdR family. Zn(2+) is required as a cofactor.

In terms of biological role, negatively regulates transcription of bacterial ribonucleotide reductase nrd genes and operons by binding to NrdR-boxes. The chain is Transcriptional repressor NrdR from Roseiflexus sp. (strain RS-1).